Reading from the N-terminus, the 148-residue chain is Snaclec stejaggregin-A subunit beta-3 (148 aa).

Positions 1-23 (MGRFISVSFGLLVVFLSLSGAGA) are cleaved as a signal peptide. Cysteine 27 and cysteine 38 are oxidised to a cystine. The 112-residue stretch at 34–145 (YDLYCYKVFK…CSRTHYVVCK (112 aa)) folds into the C-type lectin domain. 2 N-linked (GlcNAc...) asparagine glycosylation sites follow: asparagine 47 and asparagine 78. Intrachain disulfides connect cysteine 55–cysteine 144 and cysteine 121–cysteine 136.

It belongs to the snaclec family. In terms of assembly, heteromultimer; disulfide-linked. In terms of tissue distribution, expressed by the venom gland.

The protein resides in the secreted. Its function is as follows. Interferes with one step of hemostasis (modulation of platelet aggregation, or coagulation cascade, for example). This is Snaclec stejaggregin-A subunit beta-3 from Trimeresurus stejnegeri (Chinese green tree viper).